Here is a 228-residue protein sequence, read N- to C-terminus: Triosephosphate isomerase (228 aa).

11–13 is a binding site for substrate; sequence NFK. The active-site Electrophile is H95. The active-site Proton acceptor is the E143. Substrate contacts are provided by residues I148, G183, and 204-205; that span reads AS.

It belongs to the triosephosphate isomerase family. In terms of assembly, homotetramer; dimer of dimers.

The protein localises to the cytoplasm. It catalyses the reaction D-glyceraldehyde 3-phosphate = dihydroxyacetone phosphate. It participates in carbohydrate biosynthesis; gluconeogenesis. It functions in the pathway carbohydrate degradation; glycolysis; D-glyceraldehyde 3-phosphate from glycerone phosphate: step 1/1. Functionally, involved in the gluconeogenesis. Catalyzes stereospecifically the conversion of dihydroxyacetone phosphate (DHAP) to D-glyceraldehyde-3-phosphate (G3P). The polypeptide is Triosephosphate isomerase (Pyrococcus abyssi (strain GE5 / Orsay)).